A 546-amino-acid chain; its full sequence is Chaperonin GroEL 1 (546 aa).

ATP contacts are provided by residues 30–33 (TLGP), lysine 51, 87–91 (DGTTT), glycine 415, 479–481 (NAA), and aspartate 495. The tract at residues 526 to 546 (KEDAPMPGGMPGGMGGMGMDM) is disordered. Residues 534-546 (GMPGGMGGMGMDM) are compositionally biased toward gly residues.

The protein belongs to the chaperonin (HSP60) family. Forms a cylinder of 14 subunits composed of two heptameric rings stacked back-to-back. Interacts with the co-chaperonin GroES.

It is found in the cytoplasm. The catalysed reaction is ATP + H2O + a folded polypeptide = ADP + phosphate + an unfolded polypeptide.. In terms of biological role, together with its co-chaperonin GroES, plays an essential role in assisting protein folding. The GroEL-GroES system forms a nano-cage that allows encapsulation of the non-native substrate proteins and provides a physical environment optimized to promote and accelerate protein folding. This chain is Chaperonin GroEL 1, found in Burkholderia ambifaria (strain ATCC BAA-244 / DSM 16087 / CCUG 44356 / LMG 19182 / AMMD) (Burkholderia cepacia (strain AMMD)).